Consider the following 260-residue polypeptide: Adenosylcobinamide-GDP ribazoletransferase (260 aa).

6 consecutive transmembrane segments (helical) span residues 40–60, 64–84, 117–137, 192–212, 214–234, and 240–260; these read AFPL…FMAY, LPPL…TGAL, FAAL…MTII, GIGL…LSLI, ALVL…AKIG, and TLGA…VMAL.

This sequence belongs to the CobS family. Mg(2+) serves as cofactor.

Its subcellular location is the cell inner membrane. It catalyses the reaction alpha-ribazole + adenosylcob(III)inamide-GDP = adenosylcob(III)alamin + GMP + H(+). The catalysed reaction is alpha-ribazole 5'-phosphate + adenosylcob(III)inamide-GDP = adenosylcob(III)alamin 5'-phosphate + GMP + H(+). Its pathway is cofactor biosynthesis; adenosylcobalamin biosynthesis; adenosylcobalamin from cob(II)yrinate a,c-diamide: step 7/7. Its function is as follows. Joins adenosylcobinamide-GDP and alpha-ribazole to generate adenosylcobalamin (Ado-cobalamin). Also synthesizes adenosylcobalamin 5'-phosphate from adenosylcobinamide-GDP and alpha-ribazole 5'-phosphate. The chain is Adenosylcobinamide-GDP ribazoletransferase from Brucella anthropi (strain ATCC 49188 / DSM 6882 / CCUG 24695 / JCM 21032 / LMG 3331 / NBRC 15819 / NCTC 12168 / Alc 37) (Ochrobactrum anthropi).